A 163-amino-acid polypeptide reads, in one-letter code: NADH-quinone oxidoreductase subunit I (163 aa).

2 4Fe-4S ferredoxin-type domains span residues 55 to 84 (RRYP…IDAE) and 94 to 123 (TRYD…EGPN). The [4Fe-4S] cluster site is built by Cys64, Cys67, Cys70, Cys74, Cys103, Cys106, Cys109, and Cys113.

This sequence belongs to the complex I 23 kDa subunit family. In terms of assembly, NDH-1 is composed of 14 different subunits. Subunits NuoA, H, J, K, L, M, N constitute the membrane sector of the complex. It depends on [4Fe-4S] cluster as a cofactor.

The protein resides in the cell inner membrane. It catalyses the reaction a quinone + NADH + 5 H(+)(in) = a quinol + NAD(+) + 4 H(+)(out). NDH-1 shuttles electrons from NADH, via FMN and iron-sulfur (Fe-S) centers, to quinones in the respiratory chain. The immediate electron acceptor for the enzyme in this species is believed to be ubiquinone. Couples the redox reaction to proton translocation (for every two electrons transferred, four hydrogen ions are translocated across the cytoplasmic membrane), and thus conserves the redox energy in a proton gradient. The chain is NADH-quinone oxidoreductase subunit I (nuoI) from Rhodobacter capsulatus (Rhodopseudomonas capsulata).